Reading from the N-terminus, the 255-residue chain is Aprataxin and PNK-like factor (255 aa).

The span at 1–11 shows a compositional bias: low complexity; it reads MSATDASTADS. Disordered regions lie at residues 1–117, 131–168, and 195–255; these read MSAT…VSSS, RRNP…FGNA, and RLRQ…DDYD. 3 stretches are compositionally biased toward basic and acidic residues: residues 12–22, 40–64, and 137–150; these read GAKRKSSEDIT, KSEE…KAEP, and RSAE…DYRR. 2 consecutive PBZ-type zinc fingers follow at residues 121-142 and 161-182; these read TSCR…AEAH and PACP…DYSH. Over residues 207-218 the composition is skewed to acidic residues; the sequence is DDSGTDEEDEPF. Positions 221-230 are enriched in basic and acidic residues; it reads DNDRDADYRP. Acidic residues predominate over residues 234 to 244; that stretch reads INEDEDDELEF.

Belongs to the APLF family.

Its function is as follows. Displays apurinic-apyrimidinic (AP) endonuclease and 3'-5' exonuclease activities in vitro. The chain is Aprataxin and PNK-like factor from Drosophila melanogaster (Fruit fly).